Reading from the N-terminus, the 484-residue chain is Sperm motility kinase 1 (484 aa).

A Protein kinase domain is found at 8-256 (YEMLETIGQG…VAEVMVHPWI (249 aa)). ATP is bound by residues 14-22 (IGQGGCAKV) and K37. Catalysis depends on D127, which acts as the Proton acceptor. One can recognise a UBA domain in the interval 274 to 314 (KPDPAIVKPMGHIGFQAQDIEDSLRQRKFNETMASYCLLKK). The span at 423 to 434 (IDESTEGHTSAS) shows a compositional bias: polar residues. Residues 423–447 (IDESTEGHTSASAEDKPVHSRGWPR) are disordered.

It belongs to the protein kinase superfamily. Tyr protein kinase family. Smok subfamily. In terms of tissue distribution, testis-specific. Expressed in the testis from 22 days postpartum (22 dpp).

The enzyme catalyses L-seryl-[protein] + ATP = O-phospho-L-seryl-[protein] + ADP + H(+). It catalyses the reaction L-threonyl-[protein] + ATP = O-phospho-L-threonyl-[protein] + ADP + H(+). In terms of biological role, may play a role in sperm motility, especially in the regulation of flagellar function. The chain is Sperm motility kinase 1 (Smok1) from Mus musculus (Mouse).